The sequence spans 251 residues: MKNRDFEKAVVLIPARMASTRLPGKPLADIGGRPMIVQVALRAREAGAERIVVAVDDEQVFAAVQNAGFDVMMTRGDHQSGSDRIFEALQKADPYGKAEYVINVQGDLPTIEAETIRASLRPMENAAVDIATLTVEITDEEEKTNPNVVKVVGSPLSETRLRALYFTRTTAPYGDGPLYHHIGLYTYRRAALETFVRLPPSPLELRERLEQLRALEAGMRIDAEIVRSVPLGVDTPHDLEKARKILAGRTL.

The protein belongs to the KdsB family.

It is found in the cytoplasm. The enzyme catalyses 3-deoxy-alpha-D-manno-oct-2-ulosonate + CTP = CMP-3-deoxy-beta-D-manno-octulosonate + diphosphate. It participates in nucleotide-sugar biosynthesis; CMP-3-deoxy-D-manno-octulosonate biosynthesis; CMP-3-deoxy-D-manno-octulosonate from 3-deoxy-D-manno-octulosonate and CTP: step 1/1. Its pathway is bacterial outer membrane biogenesis; lipopolysaccharide biosynthesis. Activates KDO (a required 8-carbon sugar) for incorporation into bacterial lipopolysaccharide in Gram-negative bacteria. This Agrobacterium fabrum (strain C58 / ATCC 33970) (Agrobacterium tumefaciens (strain C58)) protein is 3-deoxy-manno-octulosonate cytidylyltransferase.